Reading from the N-terminus, the 102-residue chain is Small ribosomal subunit protein uS10 (102 aa).

The protein belongs to the universal ribosomal protein uS10 family. As to quaternary structure, part of the 30S ribosomal subunit.

Functionally, involved in the binding of tRNA to the ribosomes. The protein is Small ribosomal subunit protein uS10 of Geotalea daltonii (strain DSM 22248 / JCM 15807 / FRC-32) (Geobacter daltonii).